The chain runs to 294 residues: Kynurenine formamidase (294 aa).

Residues M1 to R14 are compositionally biased toward basic and acidic residues. The interval M1 to Q20 is disordered. Positions H84–W88 match the HGGXW motif. S153 acts as the Nucleophile in catalysis. Active-site residues include D236 and H269.

It belongs to the kynurenine formamidase family. As to quaternary structure, homodimer.

It is found in the cytoplasm. It localises to the cytosol. The protein resides in the nucleus. It catalyses the reaction N-formyl-L-kynurenine + H2O = L-kynurenine + formate + H(+). It functions in the pathway amino-acid degradation; L-tryptophan degradation via kynurenine pathway; L-kynurenine from L-tryptophan: step 2/2. Its function is as follows. Catalyzes the hydrolysis of N-formyl-L-kynurenine to L-kynurenine, the second step in the kynurenine pathway of tryptophan degradation. Kynurenine may be further oxidized to nicotinic acid, NAD(H) and NADP(H). Required for elimination of toxic metabolites. In Salmo salar (Atlantic salmon), this protein is Kynurenine formamidase (afmid).